The following is a 766-amino-acid chain: 1,4-alpha-glucan branching enzyme GlgB (766 aa).

The active-site Nucleophile is Asp-431. Glu-484 acts as the Proton donor in catalysis.

It belongs to the glycosyl hydrolase 13 family. GlgB subfamily. As to quaternary structure, monomer.

It carries out the reaction Transfers a segment of a (1-&gt;4)-alpha-D-glucan chain to a primary hydroxy group in a similar glucan chain.. The protein operates within glycan biosynthesis; glycogen biosynthesis. In terms of biological role, catalyzes the formation of the alpha-1,6-glucosidic linkages in glycogen by scission of a 1,4-alpha-linked oligosaccharide from growing alpha-1,4-glucan chains and the subsequent attachment of the oligosaccharide to the alpha-1,6 position. This chain is 1,4-alpha-glucan branching enzyme GlgB, found in Thermosynechococcus vestitus (strain NIES-2133 / IAM M-273 / BP-1).